Reading from the N-terminus, the 989-residue chain is ATP-dependent 6-phosphofructokinase subunit alpha (989 aa).

An N-terminal catalytic PFK domain 1 region spans residues 1 to 585; that stretch reads MPEPSISDLS…SYENFLSVSK (585 aa). ATP is bound by residues glycine 220, 283–284, and 313–316; these read RC and GDGS. Aspartate 314 contributes to the Mg(2+) binding site. Residues 359–361, arginine 396, 403–405, glutamate 460, arginine 487, and 493–496 each bind beta-D-fructose 6-phosphate; these read SID, MGR, and HVQR. The Proton acceptor role is filled by aspartate 361. The segment at 586 to 599 is interdomain linker; sequence YDDGSYLVPESSRL. The tract at residues 600 to 989 is C-terminal regulatory PFK domain 2; that stretch reads NIAIIHVGAP…LSGRLSIRTT (390 aa). Beta-D-fructose 2,6-bisphosphate is bound by residues arginine 670, 727–731, arginine 765, 772–774, glutamate 832, arginine 858, 864–867, and arginine 963; these read TVSNN, QGG, and HVQQ.

This sequence belongs to the phosphofructokinase type A (PFKA) family. ATP-dependent PFK group I subfamily. Eukaryotic two domain clade 'E' sub-subfamily. Heterododecamer of 4 alpha, 4 beta and 4 gamma chains. Mg(2+) serves as cofactor.

The protein resides in the cytoplasm. The enzyme catalyses beta-D-fructose 6-phosphate + ATP = beta-D-fructose 1,6-bisphosphate + ADP + H(+). Its pathway is carbohydrate degradation; glycolysis; D-glyceraldehyde 3-phosphate and glycerone phosphate from D-glucose: step 3/4. With respect to regulation, allosterically activated by ADP, AMP, or fructose 2,6-bisphosphate, and allosterically inhibited by ATP or citrate. Its function is as follows. Catalyzes the phosphorylation of D-fructose 6-phosphate to fructose 1,6-bisphosphate by ATP, the first committing step of glycolysis. In Komagataella pastoris (Yeast), this protein is ATP-dependent 6-phosphofructokinase subunit alpha (PFK1).